Reading from the N-terminus, the 284-residue chain is MPELPEVTTVINELKETVLNKPLDQVQVNLRKVLKNIDPQLLNKQLKNQFFTDIKRKGKYIIFLLSNGLYLVSHLRMEGKYFFEERGSKFNQKHVLVEFHFDDGSQLNYHDTRQFGTFHLYEKLEQAAQLNKLAFDPLEAGFDYRKIFQKAQNSKRKVKTFILDQTVISGIGNIYADEILFASKINPETMVDQLTIKEIEILCKNATKILAKAIVMKGTTISSFSFKKDHTGGYQNFLKVHTKKDQPCSVCNQLIVKKKINGRGSYFCLNCQKITTKVSTKLNP.

Proline 2 (schiff-base intermediate with DNA) is an active-site residue. The active-site Proton donor is glutamate 3. Lysine 59 serves as the catalytic Proton donor; for beta-elimination activity. 2 residues coordinate DNA: histidine 94 and arginine 113. The FPG-type zinc finger occupies 239–273 (KVHTKKDQPCSVCNQLIVKKKINGRGSYFCLNCQK). Residue arginine 263 is the Proton donor; for delta-elimination activity of the active site.

This sequence belongs to the FPG family. Monomer. It depends on Zn(2+) as a cofactor.

The catalysed reaction is Hydrolysis of DNA containing ring-opened 7-methylguanine residues, releasing 2,6-diamino-4-hydroxy-5-(N-methyl)formamidopyrimidine.. The enzyme catalyses 2'-deoxyribonucleotide-(2'-deoxyribose 5'-phosphate)-2'-deoxyribonucleotide-DNA = a 3'-end 2'-deoxyribonucleotide-(2,3-dehydro-2,3-deoxyribose 5'-phosphate)-DNA + a 5'-end 5'-phospho-2'-deoxyribonucleoside-DNA + H(+). Involved in base excision repair of DNA damaged by oxidation or by mutagenic agents. Acts as a DNA glycosylase that recognizes and removes damaged bases. Has a preference for oxidized purines, such as 7,8-dihydro-8-oxoguanine (8-oxoG). Has AP (apurinic/apyrimidinic) lyase activity and introduces nicks in the DNA strand. Cleaves the DNA backbone by beta-delta elimination to generate a single-strand break at the site of the removed base with both 3'- and 5'-phosphates. In Mycoplasma genitalium (strain ATCC 33530 / DSM 19775 / NCTC 10195 / G37) (Mycoplasmoides genitalium), this protein is Formamidopyrimidine-DNA glycosylase (mutM).